Consider the following 200-residue polypeptide: Pyrrolidone-carboxylate peptidase (200 aa).

Catalysis depends on residues E78, C141, and H165.

Belongs to the peptidase C15 family. In terms of assembly, homotetramer.

It localises to the cytoplasm. It catalyses the reaction Release of an N-terminal pyroglutamyl group from a polypeptide, the second amino acid generally not being Pro.. Its function is as follows. Removes 5-oxoproline from various penultimate amino acid residues except L-proline. This chain is Pyrrolidone-carboxylate peptidase, found in Lactobacillus acidophilus (strain ATCC 700396 / NCK56 / N2 / NCFM).